The following is a 308-amino-acid chain: Protoheme IX farnesyltransferase (308 aa).

The next 8 helical transmembrane spans lie at 31 to 51, 53 to 73, 102 to 122, 124 to 144, 149 to 169, 170 to 190, 240 to 260, and 288 to 308; these read VIELLLVTAIPAMLLAQRGTV, PLLIVNTLIGGMLAAGGANAL, NALVFGLVLTAGSFLWLWWTT, LLSGLLALATIAFYVFIYTLL, TSQNVVWGGAAGCMPVMIGWS, AVTGTIQWPALVMFAIIFFWT, LALATGWLYAAVAVVAGVWFL, and YLAVVFCALAIDSAIGLPHLF.

Belongs to the UbiA prenyltransferase family. Protoheme IX farnesyltransferase subfamily.

It is found in the cell membrane. The enzyme catalyses heme b + (2E,6E)-farnesyl diphosphate + H2O = Fe(II)-heme o + diphosphate. Its pathway is porphyrin-containing compound metabolism; heme O biosynthesis; heme O from protoheme: step 1/1. Functionally, converts heme B (protoheme IX) to heme O by substitution of the vinyl group on carbon 2 of heme B porphyrin ring with a hydroxyethyl farnesyl side group. This Mycobacterium avium (strain 104) protein is Protoheme IX farnesyltransferase.